A 4699-amino-acid polypeptide reads, in one-letter code: PKS-NRPS hybrid synthetase cheA (4699 aa).

Positions 1 to 21 are enriched in acidic residues; sequence MSDNDDEWNGFSDDNGEDDGP. 2 disordered regions span residues 1-38 and 136-165; these read MSDN…WDVP and DGWR…HTQH. A compositionally biased stretch (basic and acidic residues) spans 136-148; the sequence is DGWRFHSHPDPQH. Residues 172 to 520 are N-terminal acylcarrier protein transacylase domain (SAT); sequence SLDTIAELSN…VQQNVEEMAK (349 aa). Residues 625–836 form a disordered region; it reads PLPSVEDNVA…AGAPGARVTR (212 aa). Low complexity predominate over residues 674-688; it reads TQGSQGSQGRRTPGS. Positions 724–737 are enriched in basic residues; the sequence is PKRRGRPPGSKNKK. Residues 737-1138 form the Ketosynthase family 3 (KS3) domain; that stretch reads KKDQAPAPAE…GANAHAILEA (402 aa). A compositionally biased stretch (low complexity) spans 764-777; that stretch reads ASAPRRGLRAAPAA. Polar residues predominate over residues 802 to 816; sequence ATASTPRAQSDQGTG. Residues C873, H1012, and H1058 each act as for beta-ketoacyl synthase activity in the active site. The interval 1250–1573 is malonyl-CoA:ACP transacylase (MAT) domain; that stretch reads VFTGQGAQWP…VGTLLRQRDA (324 aa). The segment at 1644 to 1777 is N-terminal hotdog fold; that stretch reads NELLGTRIMD…ANLIISLGEP (134 aa). Residues 1644 to 1947 enclose the PKS/mFAS DH domain; that stretch reads NELLGTRIMD…TKPLVPPTPS (304 aa). The tract at residues 1645–1941 is dehydratase (DH) domain; it reads ELLGTRIMDN…QLQGLHTKPL (297 aa). Catalysis depends on H1676, which acts as the Proton acceptor; for dehydratase activity. Residues 1794 to 1947 are C-terminal hotdog fold; sequence MLDVPAERFY…TKPLVPPTPS (154 aa). The active-site Proton donor; for dehydratase activity is the D1854. Positions 2050 to 2241 are methyltransferase (MT) domain; it reads LNRFYIEALG…RNTGFSGADE (192 aa). The ketoreductase (KR) domain stretch occupies residues 2794-2967; sequence TYWLVGLTGG…PAAAVNIGAV (174 aa). A Carrier 1 domain is found at 3076 to 3153; it reads DASEILEDAY…ALFELVKERA (78 aa). Position 3113 is an O-(pantetheine 4'-phosphoryl)serine (S3113). A disordered region spans residues 3164–3265; that stretch reads EQPDQVKSPR…PVASSPDAGL (102 aa). Composition is skewed to polar residues over residues 3200 to 3209 and 3218 to 3233; these read SLDQGSSWDS and GHDS…SSPI. The condensation (C) domain stretch occupies residues 3268–3696; the sequence is SVPLSFSQAR…PISRISKPPL (429 aa). The tract at residues 3730-4113 is adenylation (A) domain; sequence IQAHPDKLAL…GGLILEGRID (384 aa). The Carrier 2 domain occupies 4236–4316; sequence EGLPAMQHLI…TMAALVASGS (81 aa). Residues 4241–4313 are thiolation and peptide carrier (T) domain; it reads MQHLIKQLWE…TLETMAALVA (73 aa). Position 4276 is an O-(pantetheine 4'-phosphoryl)serine (S4276). The segment at 4367-4598 is reductase (R) domain; it reads LTGSTGFLGR…ISVHTVAAAI (232 aa).

The protein in the C-terminal section; belongs to the NRP synthetase family.

The protein operates within secondary metabolite biosynthesis. PKS-NRPS hybrid synthetase; part of the gene cluster that mediates the biosynthesis of chaetoglobosin A which has a unique inhibitory activity against actin polymerization in mammalian cells. Chaetoglobosin A and its intermediates are involved in the morphological differentiation of C.globosum. The first step of the pathway is the synthesis of prochaetoglobosin I via condensation of one acetyl-CoA, 8 malonyl-CoA, and a L-tryptophan molecule by the PKS-NRPS hybrid synthetase cheA, followed by reduction of backbone double bond to install desired geometry by the enoyl reductase cheB. Further multiple oxidation steps performed by the cytochrome P450 monooxygenases cheE and cheG, as well as by the FAD-linked oxidoreductase cheF, lead to the formation of chaetoglobosin A. Depending on the order of action of these reductases, distinct intermediates can be identified. Within the pathway, the cytochrome P450 monooxygenase cheE catalyzes a stereospecific epoxidation on prochaetoglobosin I, cytoglobosin D, and chaetoglobosin J intermediates. The FAD-linked oxidoreductase cheF performs dehydrogenation of the C-20 hydroxyl groups in the 20-dihyrochaetoglobosin A and cytoglobosin D intermediates. Finally, the cytochrome P450 monooxygenase cheG can catalyze the stereospecific dihydroxylation of prochaetoglobosin I and prochaetoglobosin IV at C-19 and C-20, respectively. The Diels-Alderase cheD may play a role in the post-PKS-NRPS biosynthetic steps catalyzing Diels-Alder cyclization. The polypeptide is PKS-NRPS hybrid synthetase cheA (Chaetomium globosum (strain ATCC 6205 / CBS 148.51 / DSM 1962 / NBRC 6347 / NRRL 1970) (Soil fungus)).